Here is a 271-residue protein sequence, read N- to C-terminus: Inactive phospholipid phosphatase 7 (271 aa).

Residues 1–66 form a disordered region; that stretch reads MPASQSRARA…RERRQSQQLP (66 aa). Over 1–112 the chain is Cytoplasmic; sequence MPASQSRARA…AASWASARSM (112 aa). A phosphoserine mark is found at S43 and S62. Positions 70–91 are interaction with MTOR; sequence CMQLNPSFKGIAFNSLLAIDIC. Residues 113–133 traverse the membrane as a helical segment; sequence VKLIGITGHGIPWIGGTILCL. Residues 134–141 lie on the Extracellular side of the membrane; sequence VKSSTLAG. The chain crosses the membrane as a helical span at residues 142–162; it reads QEVLMNLLLALLLDIMTVAGV. Over 163-202 the chain is Cytoplasmic; that stretch reads QKLIKRRGPYETSPSLLDYLTMDIYAFPAGHASRAAMVSK. Residues 203–223 form a helical membrane-spanning segment; sequence FFLSHLVLAVPLRVLLVLWAL. Residues 224 to 239 are Extracellular-facing; the sequence is CVGLSRVMIGRHHVTD. Residues 240–260 form a helical membrane-spanning segment; that stretch reads VLSGFVIGYLQFRLVELVWMP. The Cytoplasmic portion of the chain corresponds to 261–271; that stretch reads SSTCQMLISAW.

Belongs to the PA-phosphatase related phosphoesterase family. Homo and heterooligomer. Interacts with MTOR; controls MTOR-dependent IGF2 expression during myoblast differentiation.

The protein localises to the nucleus envelope. The protein resides in the endoplasmic reticulum membrane. Its subcellular location is the membrane. Plays a role as negative regulator of myoblast differentiation, in part through effects on MTOR signaling. Has no detectable enzymatic activity. The protein is Inactive phospholipid phosphatase 7 of Homo sapiens (Human).